The chain runs to 1591 residues: Rho guanine nucleotide exchange factor TIAM1 (1591 aa).

A disordered region spans residues 1–78 (MGNAESQHVE…AENGLEPFSQ (78 aa)). The N-myristoyl glycine moiety is linked to residue Gly-2. Basic and acidic residues predominate over residues 7-19 (QHVEHEFYGEKHA). The span at 20–49 (SLGRKHTSRSLRLSHKTRRTRHASSGKVIH) shows a compositional bias: basic residues. Low complexity predominate over residues 53-67 (EVSTRSSSTPSIPQS). At Ser-231 the chain carries Phosphoserine. Disordered regions lie at residues 298-379 (SEGA…GDAA) and 393-422 (MSTT…SPGQ). 2 stretches are compositionally biased toward polar residues: residues 300–313 (GATN…NSMQ) and 340–361 (TTDT…SPTT). Residues Ser-356 and Ser-358 each carry the phosphoserine modification. The span at 367–377 (GSDSGSSSTGD) shows a compositional bias: low complexity. The span at 412–422 (QSSGTLSSPGQ) shows a compositional bias: polar residues. Positions 434–549 (VRKAGALAVK…TAIHSACATA (116 aa)) constitute a PH 1 domain. Ser-695 is modified (phosphoserine). The region spanning 765–832 (TPSWFCLPNN…QPEEDIYELL (68 aa)) is the RBD domain. Tyr-829 is modified (phosphotyrosine; by NTRK2). A PDZ domain is found at 845-908 (SIHIEKSDTA…NNRAADALNS (64 aa)). The tract at residues 939-1034 (SPPHRVDGPA…TGPQLATMRQ (96 aa)) is disordered. The span at 958–975 (LTSNPGHSLCSEQGSSAE) shows a compositional bias: polar residues. Positions 977–990 (APEETEGPDLESSD) are enriched in acidic residues. Over residues 1014–1024 (PSDQSPSPQDS) the composition is skewed to low complexity. The segment covering 1025–1034 (TGPQLATMRQ) has biased composition (polar residues). The 195-residue stretch at 1040–1234 (KLRKVICELL…NKVASHINEM (195 aa)) folds into the DH domain. A PH 2 domain is found at 1261–1397 (DLSMGDLLLH…KAVHSILRDK (137 aa)). Tyr-1323 is modified (phosphotyrosine). Glycyl lysine isopeptide (Lys-Gly) (interchain with G-Cter in ubiquitin) cross-links involve residues Lys-1404 and Lys-1420. Positions 1456–1482 (TIDSDAVSASSPEKESQQPPGGGDTDR) are disordered. Ser-1519 bears the Phosphoserine mark.

The protein belongs to the TIAM family. In terms of assembly, component of the Par polarity complex, composed of at least phosphorylated PRKCZ, PARD3 and TIAM1. Interacts with NTRK2; mediates the activation of RAC1 by BDNF. Interacts with MAPK8IP2 and CD44. Interacts with BAIAP2. Interacts with EPHA8; regulates clathrin-mediated endocytosis of EPHA8. Interacts with PARD3. Interacts (via PDZ domain) with CNTNAP4, SDC1 and SDC3 (via C-terminus). Post-translationally, ubiquitinated. Undergoes 'Lys-48' ubiquitination at Lys-1404 and Lys-1420 by a CUL3(KBTBD6/7) E3 ubiquitin ligase complex composed of CUL3, RBX1, KBTBD6 and KBTBD7. 'Lys-48' ubiquitination at Lys-1404 and Lys-1420 triggers proteasomal degradation. Ubiquitination at Lys-1404 and Lys-1420 by CUL3(KBTBD6/7) also requires the membrane-associated protein GABARAP and may therefore be spatially restricted within the cell. In terms of tissue distribution, found in virtually all analyzed tumor cell lines including B- and T-lymphomas, neuroblastomas, melanomas and carcinomas.

It localises to the cell junction. It is found in the cell membrane. Functionally, guanyl-nucleotide exchange factor that activates RHO-like proteins and connects extracellular signals to cytoskeletal activities. Activates RAC1, CDC42, and to a lesser extent RHOA and their downstream signaling to regulate processes like cell adhesion and cell migration. This Homo sapiens (Human) protein is Rho guanine nucleotide exchange factor TIAM1.